A 392-amino-acid polypeptide reads, in one-letter code: DNA-directed RNA polymerase subunit Rpo1C (392 aa).

The protein belongs to the RNA polymerase beta' chain family. As to quaternary structure, part of the RNA polymerase complex.

Its subcellular location is the cytoplasm. It catalyses the reaction RNA(n) + a ribonucleoside 5'-triphosphate = RNA(n+1) + diphosphate. Functionally, DNA-dependent RNA polymerase (RNAP) catalyzes the transcription of DNA into RNA using the four ribonucleoside triphosphates as substrates. Forms part of the jaw domain. The sequence is that of DNA-directed RNA polymerase subunit Rpo1C from Metallosphaera sedula (strain ATCC 51363 / DSM 5348 / JCM 9185 / NBRC 15509 / TH2).